We begin with the raw amino-acid sequence, 340 residues long: Uroporphyrinogen decarboxylase (340 aa).

Substrate-binding positions include 21–25, Phe40, Asp71, Tyr148, Ser203, and His316; that span reads RQAGR.

Belongs to the uroporphyrinogen decarboxylase family. As to quaternary structure, homodimer.

It localises to the cytoplasm. The enzyme catalyses uroporphyrinogen III + 4 H(+) = coproporphyrinogen III + 4 CO2. Its pathway is porphyrin-containing compound metabolism; protoporphyrin-IX biosynthesis; coproporphyrinogen-III from 5-aminolevulinate: step 4/4. Functionally, catalyzes the decarboxylation of four acetate groups of uroporphyrinogen-III to yield coproporphyrinogen-III. The chain is Uroporphyrinogen decarboxylase from Campylobacter jejuni subsp. jejuni serotype O:2 (strain ATCC 700819 / NCTC 11168).